A 780-amino-acid polypeptide reads, in one-letter code: LPS-assembly protein LptD (780 aa).

Positions 1–24 (MKKRFPTLLATLIWTALYSQHTLA) are cleaved as a signal peptide.

It belongs to the LptD family. As to quaternary structure, component of the lipopolysaccharide transport and assembly complex. Interacts with LptE and LptA.

Its subcellular location is the cell outer membrane. Its function is as follows. Together with LptE, is involved in the assembly of lipopolysaccharide (LPS) at the surface of the outer membrane. The polypeptide is LPS-assembly protein LptD (Yersinia pseudotuberculosis serotype I (strain IP32953)).